The sequence spans 198 residues: Thioredoxin reductase-like selenoprotein T homolog CG3887 (198 aa).

Residues 1 to 25 form the signal peptide; the sequence is MERLTGRNVALLVLCLCAGYALVFA. C49 and C52 are joined by a disulfide.

It belongs to the SelWTH family. SELT subfamily.

The catalysed reaction is [thioredoxin]-dithiol + NADP(+) = [thioredoxin]-disulfide + NADPH + H(+). In terms of biological role, probably has thioredoxin reductase-like oxidoreductase activity. The chain is Thioredoxin reductase-like selenoprotein T homolog CG3887 from Drosophila melanogaster (Fruit fly).